The following is a 453-amino-acid chain: GTPase Der (453 aa).

EngA-type G domains are found at residues Pro3–Lys167 and Ile187–Lys360. Residues Gly9–Ser16, Asp57–Leu61, Asn119–Asp122, Gly193–Ser200, Asp240–Ala244, and Asn305–Asp308 each bind GTP. A KH-like domain is found at Arg361–Glu445.

Belongs to the TRAFAC class TrmE-Era-EngA-EngB-Septin-like GTPase superfamily. EngA (Der) GTPase family. Associates with the 50S ribosomal subunit.

Its function is as follows. GTPase that plays an essential role in the late steps of ribosome biogenesis. The chain is GTPase Der from Buchnera aphidicola subsp. Acyrthosiphon pisum (strain 5A).